Consider the following 485-residue polypeptide: Transcription factor E2FA (485 aa).

Residues 1 to 11 (MSGVVRSSPGS) are compositionally biased toward low complexity. Disordered regions lie at residues 1–69 (MSGV…SNNN) and 114–159 (SGFT…SPIT). A compositionally biased stretch (pro residues) spans 12 to 26 (SQPPPPPPHHPPSSP). Polar residues predominate over residues 114–125 (SGFTNIPSSPCQ). The span at 129-141 (KGGRVNIKSKAKG) shows a compositional bias: basic residues. Over residues 142 to 159 (NKSTPQTPISTNAGSPIT) the composition is skewed to polar residues. Residues 167-232 (RYDSSLGLLT…PFKNRILWKG (66 aa)) mediate DNA binding. Residues 245–286 (SVLQLQAEIENLALEEQALDNQIRQTEERLRDLSENEKNQKW) adopt a coiled-coil conformation. Positions 249 to 277 (LQAEIENLALEEQALDNQIRQTEERLRDL) are leucine-zipper. The interval 435-450 (DYWLLSNAEISMTDIW) is retinoblastoma protein binding.

The protein belongs to the E2F/DP family. As to quaternary structure, heterodimer with DP proteins. Interacts (via dimerization domain) preferentially with DPA, but also with DPB. Interacts with maize retinoblastoma-related protein RBR1. No interaction with E2FD. Highly expressed in the shoot apical meristem, emerging leaf primordia, and vascular tissues of young leaf primordia. Expressed in flowers, in epidermis and cortex of hypocotyls, and at lower levels in leaves.

The protein localises to the cytoplasm. It is found in the nucleus. Functionally, transcription activator that binds DNA cooperatively with DP proteins through the E2 recognition site, 5'-TTTC[CG]CGC-3' found in the promoter region of a number of genes whose products are involved in cell cycle regulation or in DNA replication. The binding of retinoblastoma-related proteins represses transactivation. Regulates gene expression both positively and negatively. Activates the expression of E2FB. Involved in the control of cell-cycle progression from G1 to S phase. Stimulates cell proliferation and delays differentiation. This Arabidopsis thaliana (Mouse-ear cress) protein is Transcription factor E2FA (E2FA).